A 459-amino-acid chain; its full sequence is Antizyme inhibitor 2 (459 aa).

The segment at 117 to 140 (QVAQIKYAAKHGVRLLSFDNEVEL) is necessary for polyamine uptake stimulation.

It belongs to the Orn/Lys/Arg decarboxylase class-II family. ODC antizyme inhibitor subfamily. Monomer. Interacts with OAZ1, OAZ2 and OAZ3; this interaction disrupts the interaction between the antizyme and ODC1. Does not form a heterodimer with ODC1. In terms of processing, ubiquitinated, leading to its proteasomal degradation; a process that is reduced in presence of antizymes. May also be degraded through the lysosomal degradative pathway in a proteasomal-independent manner. In terms of tissue distribution, expressed in the medulla and chromaffin cells of the adrenal gland. Expressed in the Langerhans islets of the pancreas. Expressed in the inner part of the seminiferous tubules and in spermatozoa located in the lumen of the epididymis of the testis. Expressed in the cortex, hippocampus and cerebellum of the brain. Expressed in normal and neoplastic mast cells (MC) (at protein level). Expressed in testis, pancreas and brain. Expressed throughout the differentiation process from spermatids to spermatozoa in the inner part of the seminiferous tubules. Expressed in the kidney: expressed in the superficial (Cs) and the deep layer (Cd) of the cortex region and in the outer stripe (OS), inner stripe (IS) and the inner medulla papilla (IM) of the medulla region.

It localises to the nucleus. The protein localises to the cytoplasm. Its subcellular location is the perinuclear region. It is found in the membrane. The protein resides in the cytoplasmic vesicle. It localises to the endoplasmic reticulum-Golgi intermediate compartment. The protein localises to the golgi apparatus. Its subcellular location is the cis-Golgi network. It is found in the trans-Golgi network. The protein resides in the cytoplasmic granule. It localises to the cell projection. The protein localises to the axon. Its subcellular location is the dendrite. It is found in the perikaryon. Antizyme inhibitor (AZI) protein that positively regulates ornithine decarboxylase (ODC) activity and polyamine uptake. AZI is an enzymatically inactive ODC homolog that counteracts the negative effect of ODC antizymes (AZs) OAZ1, OAZ2 and OAZ3 on ODC activity by competing with ODC for antizyme-binding. Inhibits antizyme-dependent ODC degradation and releases ODC monomers from their inactive complex with antizymes, leading to formation of the catalytically active ODC homodimer and restoring polyamine production. Participates in the morphological integrity of the trans-Golgi network (TGN) and functions as a regulator of intracellular secretory vesicle trafficking. This is Antizyme inhibitor 2 (Azin2) from Mus musculus (Mouse).